Here is an 874-residue protein sequence, read N- to C-terminus: Alanine--tRNA ligase (874 aa).

4 residues coordinate Zn(2+): His-562, His-566, Cys-664, and His-668.

This sequence belongs to the class-II aminoacyl-tRNA synthetase family. Requires Zn(2+) as cofactor.

Its subcellular location is the cytoplasm. It carries out the reaction tRNA(Ala) + L-alanine + ATP = L-alanyl-tRNA(Ala) + AMP + diphosphate. Its function is as follows. Catalyzes the attachment of alanine to tRNA(Ala) in a two-step reaction: alanine is first activated by ATP to form Ala-AMP and then transferred to the acceptor end of tRNA(Ala). Also edits incorrectly charged Ser-tRNA(Ala) and Gly-tRNA(Ala) via its editing domain. This is Alanine--tRNA ligase from Shewanella sediminis (strain HAW-EB3).